The primary structure comprises 250 residues: 3-deoxy-manno-octulosonate cytidylyltransferase (250 aa).

It belongs to the KdsB family.

Its subcellular location is the cytoplasm. The enzyme catalyses 3-deoxy-alpha-D-manno-oct-2-ulosonate + CTP = CMP-3-deoxy-beta-D-manno-octulosonate + diphosphate. Its pathway is nucleotide-sugar biosynthesis; CMP-3-deoxy-D-manno-octulosonate biosynthesis; CMP-3-deoxy-D-manno-octulosonate from 3-deoxy-D-manno-octulosonate and CTP: step 1/1. It functions in the pathway bacterial outer membrane biogenesis; lipopolysaccharide biosynthesis. Activates KDO (a required 8-carbon sugar) for incorporation into bacterial lipopolysaccharide in Gram-negative bacteria. The sequence is that of 3-deoxy-manno-octulosonate cytidylyltransferase from Bacteroides thetaiotaomicron (strain ATCC 29148 / DSM 2079 / JCM 5827 / CCUG 10774 / NCTC 10582 / VPI-5482 / E50).